Consider the following 783-residue polypeptide: Aconitate hydratase, mitochondrial (783 aa).

The transit peptide at 1–25 (MITTRLARMGALAPKSRLLFGTRGM) directs the protein to the mitochondrion. Substrate contacts are provided by residues Q102 and 195-197 (DSH). [4Fe-4S] cluster is bound by residues C388, C451, and C454. Substrate is bound by residues R477 and R482. The segment at 524 to 555 (EFKLKAPTGDGLPSRGYDPGRDTYQAPPTDRS) is disordered. Substrate is bound by residues R610 and 673–674 (SR).

It belongs to the aconitase/IPM isomerase family. It depends on [4Fe-4S] cluster as a cofactor.

It is found in the mitochondrion. It carries out the reaction citrate = D-threo-isocitrate. The catalysed reaction is (2R)-homocitrate = cis-homoaconitate + H2O. It functions in the pathway carbohydrate metabolism; tricarboxylic acid cycle; isocitrate from oxaloacetate: step 2/2. It participates in amino-acid biosynthesis; L-lysine biosynthesis via AAA pathway; L-alpha-aminoadipate from 2-oxoglutarate: step 2/5. Its function is as follows. Catalyzes the isomerization of citrate to isocitrate via cis-aconitate, a step in the citric acid cycle. Also catalyzes the reversible dehydration of (R)-homocitrate to cis-homoaconitate, a step in the alpha-aminoadipate pathway for lysine biosynthesis. This is Aconitate hydratase, mitochondrial (acoA) from Emericella nidulans (strain FGSC A4 / ATCC 38163 / CBS 112.46 / NRRL 194 / M139) (Aspergillus nidulans).